The sequence spans 206 residues: Small ribosomal subunit protein uS4 (206 aa).

The S4 RNA-binding domain occupies Met98 to Pro164.

The protein belongs to the universal ribosomal protein uS4 family. As to quaternary structure, part of the 30S ribosomal subunit. Contacts protein S5. The interaction surface between S4 and S5 is involved in control of translational fidelity.

Functionally, one of the primary rRNA binding proteins, it binds directly to 16S rRNA where it nucleates assembly of the body of the 30S subunit. With S5 and S12 plays an important role in translational accuracy. This chain is Small ribosomal subunit protein uS4, found in Clostridium tetani (strain Massachusetts / E88).